The primary structure comprises 286 residues: Phosphatidylserine decarboxylase proenzyme (286 aa).

Active-site charge relay system; for autoendoproteolytic cleavage activity residues include Asp91, His148, and Ser251. Residue Ser251 is the Schiff-base intermediate with substrate; via pyruvic acid; for decarboxylase activity of the active site. Position 251 is a pyruvic acid (Ser); by autocatalysis (Ser251).

This sequence belongs to the phosphatidylserine decarboxylase family. PSD-B subfamily. Prokaryotic type I sub-subfamily. As to quaternary structure, heterodimer of a large membrane-associated beta subunit and a small pyruvoyl-containing alpha subunit. It depends on pyruvate as a cofactor. In terms of processing, is synthesized initially as an inactive proenzyme. Formation of the active enzyme involves a self-maturation process in which the active site pyruvoyl group is generated from an internal serine residue via an autocatalytic post-translational modification. Two non-identical subunits are generated from the proenzyme in this reaction, and the pyruvate is formed at the N-terminus of the alpha chain, which is derived from the carboxyl end of the proenzyme. The autoendoproteolytic cleavage occurs by a canonical serine protease mechanism, in which the side chain hydroxyl group of the serine supplies its oxygen atom to form the C-terminus of the beta chain, while the remainder of the serine residue undergoes an oxidative deamination to produce ammonia and the pyruvoyl prosthetic group on the alpha chain. During this reaction, the Ser that is part of the protease active site of the proenzyme becomes the pyruvoyl prosthetic group, which constitutes an essential element of the active site of the mature decarboxylase.

The protein resides in the cell membrane. The catalysed reaction is a 1,2-diacyl-sn-glycero-3-phospho-L-serine + H(+) = a 1,2-diacyl-sn-glycero-3-phosphoethanolamine + CO2. The protein operates within phospholipid metabolism; phosphatidylethanolamine biosynthesis; phosphatidylethanolamine from CDP-diacylglycerol: step 2/2. Functionally, catalyzes the formation of phosphatidylethanolamine (PtdEtn) from phosphatidylserine (PtdSer). The chain is Phosphatidylserine decarboxylase proenzyme from Marinobacter nauticus (strain ATCC 700491 / DSM 11845 / VT8) (Marinobacter aquaeolei).